We begin with the raw amino-acid sequence, 465 residues long: Phospholipase A1-II 5 (465 aa).

Residue Ser-233 is the Acyl-ester intermediate of the active site. Catalysis depends on charge relay system residues Ser-233, Asp-297, and His-336.

The protein belongs to the AB hydrolase superfamily. Lipase family.

The protein localises to the cytoplasm. Its function is as follows. Acylhydrolase that catalyzes the hydrolysis of phospholipids at the sn-1 position. In Oryza sativa subsp. japonica (Rice), this protein is Phospholipase A1-II 5.